A 482-amino-acid chain; its full sequence is Pup--protein ligase (482 aa).

A Mg(2+)-binding site is contributed by Glu16. ATP is bound at residue Arg60. Mg(2+) is bound at residue Tyr62. Catalysis depends on Asp64, which acts as the Proton acceptor. Glu70 lines the Mg(2+) pocket. Residues Thr73 and Trp440 each contribute to the ATP site.

Belongs to the Pup ligase/Pup deamidase family. Pup-conjugating enzyme subfamily.

The enzyme catalyses ATP + [prokaryotic ubiquitin-like protein]-L-glutamate + [protein]-L-lysine = ADP + phosphate + N(6)-([prokaryotic ubiquitin-like protein]-gamma-L-glutamyl)-[protein]-L-lysine.. The protein operates within protein degradation; proteasomal Pup-dependent pathway. It participates in protein modification; protein pupylation. Its function is as follows. Catalyzes the covalent attachment of the prokaryotic ubiquitin-like protein modifier Pup to the proteasomal substrate proteins, thereby targeting them for proteasomal degradation. This tagging system is termed pupylation. The ligation reaction involves the side-chain carboxylate of the C-terminal glutamate of Pup and the side-chain amino group of a substrate lysine. In Corynebacterium glutamicum (strain R), this protein is Pup--protein ligase.